Reading from the N-terminus, the 82-residue chain is Sulfur carrier protein TusA (82 aa).

Residue Cys-20 is the Cysteine persulfide intermediate of the active site.

This sequence belongs to the sulfur carrier protein TusA family.

The protein resides in the cytoplasm. In terms of biological role, sulfur carrier protein which probably makes part of a sulfur-relay system. The sequence is that of Sulfur carrier protein TusA from Aeromonas hydrophila subsp. hydrophila (strain ATCC 7966 / DSM 30187 / BCRC 13018 / CCUG 14551 / JCM 1027 / KCTC 2358 / NCIMB 9240 / NCTC 8049).